We begin with the raw amino-acid sequence, 268 residues long: Malonyl-[acyl-carrier protein] O-methyltransferase (268 aa).

Belongs to the methyltransferase superfamily.

The enzyme catalyses malonyl-[ACP] + S-adenosyl-L-methionine = malonyl-[ACP] methyl ester + S-adenosyl-L-homocysteine. It participates in cofactor biosynthesis; biotin biosynthesis. Functionally, converts the free carboxyl group of a malonyl-thioester to its methyl ester by transfer of a methyl group from S-adenosyl-L-methionine (SAM). It allows to synthesize pimeloyl-ACP via the fatty acid synthetic pathway. In Prosthecochloris aestuarii (strain DSM 271 / SK 413), this protein is Malonyl-[acyl-carrier protein] O-methyltransferase.